Reading from the N-terminus, the 492-residue chain is Ketol-acid reductoisomerase (NADP(+)) (492 aa).

Positions Leu-17–Ser-208 constitute a KARI N-terminal Rossmann domain. NADP(+) contacts are provided by residues Cys-45–Gln-48, Arg-68, Ser-76, and Ser-78. The active site involves His-132. Gly-158 contributes to the NADP(+) binding site. KARI C-terminal knotted domains follow at residues Ser-209–Val-344 and Tyr-345–Met-487. Mg(2+)-binding residues include Asp-217, Glu-221, Glu-389, and Glu-393. Ser-414 is a binding site for substrate.

This sequence belongs to the ketol-acid reductoisomerase family. Mg(2+) is required as a cofactor.

It catalyses the reaction (2R)-2,3-dihydroxy-3-methylbutanoate + NADP(+) = (2S)-2-acetolactate + NADPH + H(+). The enzyme catalyses (2R,3R)-2,3-dihydroxy-3-methylpentanoate + NADP(+) = (S)-2-ethyl-2-hydroxy-3-oxobutanoate + NADPH + H(+). It participates in amino-acid biosynthesis; L-isoleucine biosynthesis; L-isoleucine from 2-oxobutanoate: step 2/4. Its pathway is amino-acid biosynthesis; L-valine biosynthesis; L-valine from pyruvate: step 2/4. Functionally, involved in the biosynthesis of branched-chain amino acids (BCAA). Catalyzes an alkyl-migration followed by a ketol-acid reduction of (S)-2-acetolactate (S2AL) to yield (R)-2,3-dihydroxy-isovalerate. In the isomerase reaction, S2AL is rearranged via a Mg-dependent methyl migration to produce 3-hydroxy-3-methyl-2-ketobutyrate (HMKB). In the reductase reaction, this 2-ketoacid undergoes a metal-dependent reduction by NADPH to yield (R)-2,3-dihydroxy-isovalerate. The protein is Ketol-acid reductoisomerase (NADP(+)) of Blochmanniella floridana.